The following is a 141-amino-acid chain: Large ribosomal subunit protein uL11 (141 aa).

The protein belongs to the universal ribosomal protein uL11 family. As to quaternary structure, part of the ribosomal stalk of the 50S ribosomal subunit. Interacts with L10 and the large rRNA to form the base of the stalk. L10 forms an elongated spine to which L12 dimers bind in a sequential fashion forming a multimeric L10(L12)X complex. One or more lysine residues are methylated.

Functionally, forms part of the ribosomal stalk which helps the ribosome interact with GTP-bound translation factors. In Synechococcus sp. (strain ATCC 27144 / PCC 6301 / SAUG 1402/1) (Anacystis nidulans), this protein is Large ribosomal subunit protein uL11.